A 1788-amino-acid polypeptide reads, in one-letter code: Protein Shroom3 (1788 aa).

Disordered stretches follow at residues Met1–Asp25, Glu146–Leu174, Lys225–Pro263, Gly321–Gly367, Pro382–Leu401, Asn469–His488, Thr498–Leu548, Glu727–Thr768, Thr793–Thr821, Thr876–Ser915, Ser1011–Asn1067, Ser1086–Lys1133, Lys1171–Glu1263, Asp1303–Leu1324, Val1404–Gln1467, and Ala1507–Thr1538. Composition is skewed to polar residues over residues Val147–Pro161 and His230–Gln240. 2 stretches are compositionally biased toward basic and acidic residues: residues Val245–Pro259 and Ser357–Glu366. The segment covering Asn476–His488 has biased composition (basic and acidic residues). Residues Val708 to Gly811 enclose the ASD1 domain. A compositionally biased stretch (basic and acidic residues) spans Thr793–Asn808. Residues Gln893 to Asp903 are compositionally biased toward polar residues. The span at Asn904–Ser915 shows a compositional bias: low complexity. Polar residues-rich tracts occupy residues Glu1055–Asn1067, Glu1100–Gly1124, and Thr1211–Glu1263. A compositionally biased stretch (pro residues) spans Pro1313–Ser1323. Residues Ser1433–Leu1451 are compositionally biased toward polar residues. The ASD2 domain occupies Gln1467–Pro1756. Over residues Ser1529–Thr1538 the composition is skewed to basic and acidic residues. A coiled-coil region spans residues Arg1653–Leu1708.

Belongs to the shroom family. Interacts with F-actin. Interacts with ROCK1. In terms of tissue distribution, expressed in epithelial cells of the cement gland.

Its subcellular location is the cell junction. The protein resides in the adherens junction. It localises to the cytoplasm. The protein localises to the cytoskeleton. It is found in the apical cell membrane. In terms of biological role, controls cell shape changes in the neuroepithelium during neural tube closure. Induces apical constriction in epithelial cells by promoting the apical accumulation of F-actin and myosin II, and probably by bundling stress fibers. Induces apicobasal cell elongation by redistributing gamma-tubulin and directing the assembly of robust apicobasal microtubule arrays. The protein is Protein Shroom3 (shroom3) of Xenopus laevis (African clawed frog).